The chain runs to 196 residues: Large ribosomal subunit protein uL6 (196 aa).

Belongs to the universal ribosomal protein uL6 family. As to quaternary structure, part of the 50S ribosomal subunit.

Functionally, this protein binds to the 23S rRNA, and is important in its secondary structure. It is located near the subunit interface in the base of the L7/L12 stalk, and near the tRNA binding site of the peptidyltransferase center. This is Large ribosomal subunit protein uL6 from Pyrobaculum aerophilum (strain ATCC 51768 / DSM 7523 / JCM 9630 / CIP 104966 / NBRC 100827 / IM2).